Reading from the N-terminus, the 159-residue chain is Ribonuclease H (159 aa).

The 142-residue stretch at 4–145 (THKQVNIYTD…CDKLARDAAE (142 aa)) folds into the RNase H type-1 domain. Mg(2+) contacts are provided by Asp-13, Glu-51, Asp-73, and Asp-137.

Belongs to the RNase H family. In terms of assembly, monomer. Mg(2+) is required as a cofactor.

The protein resides in the cytoplasm. The catalysed reaction is Endonucleolytic cleavage to 5'-phosphomonoester.. Endonuclease that specifically degrades the RNA of RNA-DNA hybrids. The chain is Ribonuclease H from Shewanella denitrificans (strain OS217 / ATCC BAA-1090 / DSM 15013).